The chain runs to 218 residues: Claudin-5 (218 aa).

Residues 1–7 (MGSAALE) are Cytoplasmic-facing. Residues 8 to 28 (ILGLVLCLVGWGGLILACGLP) traverse the membrane as a helical segment. Residues 29–81 (MWQVTAFLDHNIVTAQTTWKGLWMSCVVQSTGHMQCKVYDSVLALSTEVQAAR) are Extracellular-facing. Residues 82 to 102 (ALTVSAVLLAFVALFVTLAGA) form a helical membrane-spanning segment. At 103–122 (QCTTCVAPGPAKARVALTGG) the chain is on the cytoplasmic side. The chain crosses the membrane as a helical span at residues 123 to 143 (VLYLFCGLLALVPLCWFANIV). Topologically, residues 144–159 (VREFYDPSVPVSQKYE) are extracellular. Residues 160–180 (LGAALYIGWAATALLMVGGCL) form a helical membrane-spanning segment. The Cytoplasmic portion of the chain corresponds to 181–218 (LCCGAWVCTGRPDLSFPVKYSAPRRPTATGDYDKKNYV). The segment at 217-218 (YV) is interactions with TJP1, TJP2 and TJP3.

The protein belongs to the claudin family. In terms of assembly, directly interacts with TJP1/ZO-1, TJP2/ZO-2 and TJP3/ZO-3. Interacts with MPDZ.

It is found in the cell junction. The protein localises to the tight junction. It localises to the cell membrane. Its function is as follows. Plays a major role in tight junction-specific obliteration of the intercellular space. In Homo sapiens (Human), this protein is Claudin-5 (CLDN5).